Here is a 1028-residue protein sequence, read N- to C-terminus: Unconventional myosin-Ic-A (1028 aa).

M1 carries the N-acetylmethionine modification. In terms of domain architecture, Myosin motor spans 12–696 (GVQDFVLLEN…TLFATEDALE (685 aa)). 105-112 (GESGSGKT) provides a ligand contact to ATP. Residue K348 is modified to N6-methyllysine. The actin-binding stretch occupies residues 573 to 595 (LSKLMEILMSKEPSYVRCIKPND). IQ domains lie at 699–728 (KQGIATFLQARWKGYVQRRNFLHMKHSAIN) and 722–751 (MKHSAINIQSWWRGNIGRKKAAKKRWAVDV). The TH1 domain occupies 850-1024 (KDNYPQSVPR…NGHLSVVAPR (175 aa)).

This sequence belongs to the TRAFAC class myosin-kinesin ATPase superfamily. Myosin family. In terms of assembly, interacts (via its IQ motifs) with calmodulin.

Its subcellular location is the cytoplasm. The protein localises to the cell membrane. The protein resides in the cell projection. It localises to the stereocilium membrane. Functionally, myosins are actin-based motor molecules with ATPase activity. Unconventional myosins serve in intracellular movements. Their highly divergent tails are presumed to bind to membranous compartments, which would be moved relative to actin filaments. Involved in egg activation by coupling dynamic actin to membrane. The sequence is that of Unconventional myosin-Ic-A (myo1c-a) from Xenopus laevis (African clawed frog).